We begin with the raw amino-acid sequence, 668 residues long: Chitin synthase 8 (668 aa).

Over residues 1–26 the composition is skewed to polar residues; sequence MTSRMPTSGHRTSSSSSERGNMSVQQ. Residues 1 to 62 form a disordered region; that stretch reads MTSRMPTSGH…PAPLRPGWTL (62 aa). N-linked (GlcNAc...) asparagine glycosylation is found at Asn-21, Asn-98, and Asn-101. 2 helical membrane-spanning segments follow: residues 136 to 156 and 162 to 182; these read WSLIIGLAGINGALIYIGWKY and FFLVLLSSNTVLQSFMCICII. N-linked (GlcNAc...) asparagine glycosylation is found at Asn-216 and Asn-476. 4 helical membrane passes run 522–542, 548–568, 583–603, and 615–635; these read WALGSISNEFVMIFRPGIILI, LIAVITWAITPFIIAAFVELL, VFLGLICVLFFRYLYSFCIGF, and YFAGYVMHLFTSPFMNIIILV.

The protein belongs to the chitin synthase family. Class VIII subfamily.

It localises to the cell membrane. The protein resides in the cell septum. The enzyme catalyses [(1-&gt;4)-N-acetyl-beta-D-glucosaminyl](n) + UDP-N-acetyl-alpha-D-glucosamine = [(1-&gt;4)-N-acetyl-beta-D-glucosaminyl](n+1) + UDP + H(+). In terms of biological role, polymerizes chitin, a structural polymer of the cell wall and septum, by transferring the sugar moiety of UDP-GlcNAc to the non-reducing end of the growing chitin polymer. Participated in the development of cell wall and plays a critical role in fungal response to environmental stresses. Necessary for pathogenicity and deoxinivalenol (DON) production. This chain is Chitin synthase 8, found in Gibberella zeae (strain ATCC MYA-4620 / CBS 123657 / FGSC 9075 / NRRL 31084 / PH-1) (Wheat head blight fungus).